We begin with the raw amino-acid sequence, 1389 residues long: Carboxypeptidase D (1389 aa).

The N-terminal stretch at 1–25 is a signal peptide; it reads MAGAARGLLWAALSLCLLPEPLRAA. The Extracellular portion of the chain corresponds to 26-1308; sequence HIKKAEAAAA…ENRIFGLPRE (1283 aa). Residues 46–383 form the Peptidase M14 1 domain; it reads RYLHAAELGQ…ESLLTFIEKV (338 aa). The segment at 95–133 is disordered; sequence LPEARQDGEKKKKEEEEEEEEEEGEEGGGGALPGRPQVK. Residues 96–108 show a composition bias toward basic and acidic residues; sequence PEARQDGEKKKKE. A compositionally biased stretch (acidic residues) spans 109-120; it reads EEEEEEEEEGEE. Zn(2+) contacts are provided by H139 and E142. N172 carries N-linked (GlcNAc...) asparagine glycosylation. The interval 188-235 is disordered; sequence ERAREGDCGGGGGGGGEGGGEPGGRENSRGRDLNRSFPDQFGSAQPDL. Over residues 195 to 209 the composition is skewed to gly residues; sequence CGGGGGGGGEGGGEP. The segment covering 210–221 has biased composition (basic and acidic residues); the sequence is GGRENSRGRDLN. N221 is a glycosylation site (N-linked (GlcNAc...) asparagine). H260 contacts Zn(2+). E353 (proton donor/acceptor) is an active-site residue. N402, N413, N432, and N472 each carry an N-linked (GlcNAc...) asparagine glycan. The Peptidase M14 2 domain maps to 511 to 801; it reads RHHHFSDMEI…RSLLQFIKQV (291 aa). H573 and E576 together coordinate Zn(2+). Positions 614–639 are disordered; the sequence is SMNPDGYEKSQEGDRGGTVGRNNSNN. Basic and acidic residues predominate over residues 619–628; that stretch reads GYEKSQEGDR. Residue N635 is glycosylated (N-linked (GlcNAc...) asparagine). Zn(2+) is bound at residue H680. E771 (proton donor/acceptor) is an active-site residue. N820, N876, N958, N981, N1073, and N1151 each carry an N-linked (GlcNAc...) asparagine glycan. A Peptidase M14 3 domain is found at 935-1220; sequence RYRPYKDLSE…KSLLSMLVEV (286 aa). Residues 1309–1329 traverse the membrane as a helical segment; the sequence is LVVTVAGASMSALVLTACIIW. Residues C1326, C1330, and C1332 are each lipidated (S-palmitoyl cysteine). Topologically, residues 1330 to 1389 are cytoplasmic; the sequence is CVCSIKSNRHKDGFPTLRQHHDDYEDEIRMMSTGSKKSLLSHEFQDETDTEEETLYSSKH. Residues 1367-1389 are disordered; the sequence is SLLSHEFQDETDTEEETLYSSKH.

The protein belongs to the peptidase M14 family. Binds to pre-S, hepatitis B virus large envelope protein, via the carboxypeptidase-like domain. It depends on Zn(2+) as a cofactor. The N-terminus is blocked. Expressed in liver, lung, kidney, heart, stomach, pancreas, spleen, gall bladder and intestine, but not in skeletal muscle.

The protein localises to the cell membrane. The enzyme catalyses Releases C-terminal Arg and Lys from polypeptides.. The protein is Carboxypeptidase D (CPD) of Anas platyrhynchos (Mallard).